Here is a 146-residue protein sequence, read N- to C-terminus: Hemoglobin subunit delta (146 aa).

A Globin domain is found at 2–146 (HLTGEEKSAV…VATALAHKYH (145 aa)). 2 residues coordinate heme b: histidine 63 and histidine 92.

It belongs to the globin family. As to quaternary structure, heterotetramer of two delta chains and two alpha chains. Red blood cells.

The chain is Hemoglobin subunit delta (HBD) from Ateles fusciceps (Brown-headed spider monkey).